The following is a 294-amino-acid chain: Ribosomal protein L11 methyltransferase (294 aa).

The S-adenosyl-L-methionine site is built by Thr146, Gly167, Asp189, and Asn231.

It belongs to the methyltransferase superfamily. PrmA family.

It is found in the cytoplasm. It catalyses the reaction L-lysyl-[protein] + 3 S-adenosyl-L-methionine = N(6),N(6),N(6)-trimethyl-L-lysyl-[protein] + 3 S-adenosyl-L-homocysteine + 3 H(+). Methylates ribosomal protein L11. The protein is Ribosomal protein L11 methyltransferase of Aliivibrio salmonicida (strain LFI1238) (Vibrio salmonicida (strain LFI1238)).